The following is a 189-amino-acid chain: NADH-quinone oxidoreductase subunit B (189 aa).

[4Fe-4S] cluster is bound by residues C39, C40, C104, and C135.

It belongs to the complex I 20 kDa subunit family. As to quaternary structure, NDH-1 is composed of 14 different subunits. Subunits NuoB, C, D, E, F, and G constitute the peripheral sector of the complex. It depends on [4Fe-4S] cluster as a cofactor.

The protein resides in the cell inner membrane. The enzyme catalyses a quinone + NADH + 5 H(+)(in) = a quinol + NAD(+) + 4 H(+)(out). Functionally, NDH-1 shuttles electrons from NADH, via FMN and iron-sulfur (Fe-S) centers, to quinones in the respiratory chain. The immediate electron acceptor for the enzyme in this species is believed to be a menaquinone. Couples the redox reaction to proton translocation (for every two electrons transferred, four hydrogen ions are translocated across the cytoplasmic membrane), and thus conserves the redox energy in a proton gradient. The chain is NADH-quinone oxidoreductase subunit B from Chlorobium luteolum (strain DSM 273 / BCRC 81028 / 2530) (Pelodictyon luteolum).